The chain runs to 294 residues: Acetyl-coenzyme A carboxylase carboxyl transferase subunit beta (294 aa).

In terms of domain architecture, CoA carboxyltransferase N-terminal spans 25-294 (IWTKCDNCGQ…PKVDYRHCVE (270 aa)). Residues Cys29, Cys32, Cys48, and Cys51 each contribute to the Zn(2+) site. The C4-type zinc finger occupies 29–51 (CDNCGQLLYKKELERNLEVCPKC).

It belongs to the AccD/PCCB family. As to quaternary structure, acetyl-CoA carboxylase is a heterohexamer composed of biotin carboxyl carrier protein (AccB), biotin carboxylase (AccC) and two subunits each of ACCase subunit alpha (AccA) and ACCase subunit beta (AccD). The cofactor is Zn(2+).

It localises to the cytoplasm. It carries out the reaction N(6)-carboxybiotinyl-L-lysyl-[protein] + acetyl-CoA = N(6)-biotinyl-L-lysyl-[protein] + malonyl-CoA. The protein operates within lipid metabolism; malonyl-CoA biosynthesis; malonyl-CoA from acetyl-CoA: step 1/1. Functionally, component of the acetyl coenzyme A carboxylase (ACC) complex. Biotin carboxylase (BC) catalyzes the carboxylation of biotin on its carrier protein (BCCP) and then the CO(2) group is transferred by the transcarboxylase to acetyl-CoA to form malonyl-CoA. This is Acetyl-coenzyme A carboxylase carboxyl transferase subunit beta from Blochmanniella pennsylvanica (strain BPEN).